The primary structure comprises 159 residues: UPF0178 protein AZC_4000 (159 aa).

Belongs to the UPF0178 family.

This chain is UPF0178 protein AZC_4000, found in Azorhizobium caulinodans (strain ATCC 43989 / DSM 5975 / JCM 20966 / LMG 6465 / NBRC 14845 / NCIMB 13405 / ORS 571).